The sequence spans 365 residues: Phospho-N-acetylmuramoyl-pentapeptide-transferase (365 aa).

9 helical membrane passes run 47–67, 92–112, 114–134, 153–173, 180–200, 215–235, 239–259, 281–301, and 344–364; these read LLAL…VVPL, PTMG…ILAG, SPLV…GWLD, LCLQ…QQGW, ITLP…LAVF, LDGL…LWLA, PAIA…LLHN, AIAI…LFVL, and TQVV…CWLL.

It belongs to the glycosyltransferase 4 family. MraY subfamily. It depends on Mg(2+) as a cofactor.

It localises to the cell inner membrane. The catalysed reaction is UDP-N-acetyl-alpha-D-muramoyl-L-alanyl-gamma-D-glutamyl-meso-2,6-diaminopimeloyl-D-alanyl-D-alanine + di-trans,octa-cis-undecaprenyl phosphate = di-trans,octa-cis-undecaprenyl diphospho-N-acetyl-alpha-D-muramoyl-L-alanyl-D-glutamyl-meso-2,6-diaminopimeloyl-D-alanyl-D-alanine + UMP. It functions in the pathway cell wall biogenesis; peptidoglycan biosynthesis. Catalyzes the initial step of the lipid cycle reactions in the biosynthesis of the cell wall peptidoglycan: transfers peptidoglycan precursor phospho-MurNAc-pentapeptide from UDP-MurNAc-pentapeptide onto the lipid carrier undecaprenyl phosphate, yielding undecaprenyl-pyrophosphoryl-MurNAc-pentapeptide, known as lipid I. The chain is Phospho-N-acetylmuramoyl-pentapeptide-transferase from Synechococcus elongatus (strain ATCC 33912 / PCC 7942 / FACHB-805) (Anacystis nidulans R2).